Reading from the N-terminus, the 178-residue chain is Interleukin-10 (178 aa).

Residues 1 to 18 form the signal peptide; the sequence is MHSSALLCCLVFLTGVRA. Cystine bridges form between cysteine 30–cysteine 126 and cysteine 80–cysteine 132. An N-linked (GlcNAc...) asparagine glycan is attached at asparagine 134.

Belongs to the IL-10 family. As to quaternary structure, homodimer. Interacts with IL10RA and IL10RB.

The protein localises to the secreted. Its function is as follows. Major immune regulatory cytokine that acts on many cells of the immune system where it has profound anti-inflammatory functions, limiting excessive tissue disruption caused by inflammation. Mechanistically, IL10 binds to its heterotetrameric receptor comprising IL10RA and IL10RB leading to JAK1 and STAT2-mediated phosphorylation of STAT3. In turn, STAT3 translocates to the nucleus where it drives expression of anti-inflammatory mediators. Targets antigen-presenting cells (APCs) such as macrophages and monocytes and inhibits their release of pro-inflammatory cytokines including granulocyte-macrophage colony-stimulating factor /GM-CSF, granulocyte colony-stimulating factor/G-CSF, IL-1 alpha, IL-1 beta, IL-6, IL-8 and TNF-alpha. Also interferes with antigen presentation by reducing the expression of MHC-class II and co-stimulatory molecules, thereby inhibiting their ability to induce T cell activation. In addition, controls the inflammatory response of macrophages by reprogramming essential metabolic pathways including mTOR signaling. In Callithrix jacchus (White-tufted-ear marmoset), this protein is Interleukin-10 (IL10).